Consider the following 621-residue polypeptide: tRNA uridine 5-carboxymethylaminomethyl modification enzyme MnmG (621 aa).

11-16 contributes to the FAD binding site; it reads GAGHAG. Position 271-285 (271-285) interacts with NAD(+); the sequence is GPRYCPSVEDKINRF.

This sequence belongs to the MnmG family. As to quaternary structure, homodimer. Heterotetramer of two MnmE and two MnmG subunits. Requires FAD as cofactor.

It is found in the cytoplasm. Functionally, NAD-binding protein involved in the addition of a carboxymethylaminomethyl (cmnm) group at the wobble position (U34) of certain tRNAs, forming tRNA-cmnm(5)s(2)U34. The polypeptide is tRNA uridine 5-carboxymethylaminomethyl modification enzyme MnmG (Cytophaga hutchinsonii (strain ATCC 33406 / DSM 1761 / CIP 103989 / NBRC 15051 / NCIMB 9469 / D465)).